Here is a 357-residue protein sequence, read N- to C-terminus: Solute carrier family 25 member 3 (357 aa).

The transit peptide at 1-45 (MFSSVAHLARANPFNAPHLQLVHDGLSGPRSPPAPPRRSRHLAAA) directs the protein to the mitochondrion. Over 46–58 (AVEEYSCEFGSMK) the chain is Mitochondrial intermembrane. Solcar repeat units lie at residues 58-142 (KYYA…FKAL), 155-239 (WRTS…TVEA), and 256-334 (EQLV…VKVY). Residues 59 to 81 (YYALCGFGGVLSCGLTHTAVVPL) form a helical membrane-spanning segment. The Mitochondrial matrix segment spans residues 82 to 116 (DLVKCRMQVDPQKYKGIFNGFSITLKEDGVRGLAK). Lysine 94 is subject to N6-acetyllysine. Lysine 107 is subject to N6-methyllysine. A helical transmembrane segment spans residues 117 to 136 (GWAPTLIGYSMQGLCKFGFY). Residues 137–156 (EVFKALYSNILGEENTYLWR) are Mitochondrial intermembrane-facing. A helical membrane pass occupies residues 157–178 (TSLYLASSASAEFFADIALAPM). The Mitochondrial matrix portion of the chain corresponds to 179–213 (EAAKVRIQTQPGYANTLREAVPKMYKEEGLNAFYK). Position 191 is a phosphotyrosine (tyrosine 191). At lysine 204 the chain carries N6-acetyllysine. A helical membrane pass occupies residues 214-233 (GVAPLWMRQIPYTMMKFACF). Residues 234–256 (ERTVEALYKFVVPKPRSECTKAE) are Mitochondrial intermembrane-facing. The chain crosses the membrane as a helical span at residues 257–279 (QLVVTFVAGYIAGVFCAIVSHPA). Residues 280–309 (DSVVSVLNKEKGSTASQVLQRLGFRGVWKG) lie on the Mitochondrial matrix side of the membrane. Residues 310–328 (LFARIIMIGTLTALQWFIY) traverse the membrane as a helical segment. Topologically, residues 329–357 (DSVKVYFRLPRPPPPEMPESLKKKLGLTE) are mitochondrial intermembrane.

Belongs to the mitochondrial carrier (TC 2.A.29) family. In terms of assembly, interacts with PPIF; the interaction is impaired by CsA.

It localises to the mitochondrion inner membrane. It catalyses the reaction phosphate(in) + H(+)(in) = phosphate(out) + H(+)(out). Functionally, inorganic ion transporter that transports phosphate or copper ions across the mitochondrial inner membrane into the matrix compartment. Mediates proton-coupled symport of phosphate ions necessary for mitochondrial oxidative phosphorylation of ADP to ATP. Transports copper ions probably in the form of anionic copper(I) complexes to maintain mitochondrial matrix copper pool and to supply copper for cytochrome C oxidase complex assembly. May also play a role in regulation of the mitochondrial permeability transition pore (mPTP). The chain is Solute carrier family 25 member 3 from Mus musculus (Mouse).